We begin with the raw amino-acid sequence, 894 residues long: MLSRPSSRFLSTKRGPGPAVKKLIAIGEKWKQKTTRGLPKQDTLNSGSKYILCQFPYPSGALHIGHLRVYVISDSLNRFYKQKGYNVIHPMGWDAFGLPAENAAIERSINPAIWTRDNIAKMKQQMQSMLANFDWDREITTCDPEYYKFTQWIFLKLFENGLAYRKEAEINWDPVDMTVLANEQVDAQGRSWRSGAIVEKKQLKQWFLGITKFAPKLKKHLNQLKDWPSNVKQMQKNWIGESVGAELVFKVADPKFENLIVFTTRPETLFAVQYVALALDHPIVQKYCEEMPDLKEFIQKSDQLPNDTKEGFQLPNIKAVNPLTKEEVPIFAAPYVVSSYGSAPSAVMGCPGHDNRDFEFWQTNCPGEHIKTCIAPFFDDASKVTEQERQRIIDTVPFTSTDGVLTKECGEHSGVLTVVARKSIMGMLNSEGLSKSVVRYKIRDWLISRQRYWGTPIPIIHCDNCGPVPVPESDLPVKLPELEGLDTKGNPLSTIDEFVNVACPSCGSPAKRETDTMDTFIDSSWYYFRFLDPKNTSKPFDREIASKNMPVDIYIGGVEHAILHLLYSRFIAKFLGSINAWSDPAGIFEPFKKLVTQGMVQGKTYVDPDSGKFLKPDELTFVNDSPDGNTVIIKSNGKVPVVSYEKMSKSKYNGADPNECILRHGPDATRAHILFQSPIADALNWDESKIVGIERWLQKVLHLTKNILSLEKDLAISKDYKTPTDLNDAEVKFHNDFQRFLKSITESFEVNLSLNTVISDYMKLTNILESALKKGEVRNEMIVQNLQKLVTVIYPAVPSISEEAAEMINSQMEWNQYRWPEVERTTESKFKKFQIVVNGRVKFMYTADKNFLKLGRDAVIETLMNLPEGRMYLMNKKIKKFVMKFNVISFLFHK.

A mitochondrion-targeting transit peptide spans 1-9 (MLSRPSSRF). Positions 56–66 (PYPSGALHIGH) match the 'HIGH' region motif. The short motif at 646–650 (KMSKS) is the 'KMSKS' region element. Residue Lys649 participates in ATP binding.

It belongs to the class-I aminoacyl-tRNA synthetase family.

The protein localises to the mitochondrion matrix. The enzyme catalyses tRNA(Leu) + L-leucine + ATP = L-leucyl-tRNA(Leu) + AMP + diphosphate. Functionally, catalyzes the attachment of leucine to tRNA(Leu) in the mitochondrion. This Saccharomyces cerevisiae (strain ATCC 204508 / S288c) (Baker's yeast) protein is Leucine--tRNA ligase, mitochondrial (NAM2).